Reading from the N-terminus, the 238-residue chain is Laccase-S (238 aa).

2 consecutive Plastocyanin-like domains span residues 4–87 (NVIA…YDPA) and 100–238 (HTII…IARY). Residue N8 is glycosylated (N-linked (GlcNAc...) asparagine). Positions 21, 23, 66, and 68 each coordinate Cu cation. C74 and C162 form a disulfide bridge. An N-linked (GlcNAc...) asparagine glycan is attached at N165.

Belongs to the multicopper oxidase family. Monomer. The cofactor is Cu cation.

It is found in the secreted. It catalyses the reaction 4 hydroquinone + O2 = 4 benzosemiquinone + 2 H2O. Its activity is regulated as follows. Activity is strongly promoted by toluene. Activity is promoted by magnesium, potassium, cadmium, zinc, nickel, sodium, lead and manganese ions. Completely inhibited by IAA (cysteine protease inhibitor), PMSF (serine protease inhibitor), DEP (histidine protease inhibitor) and NAI (tyrosine protease inhibitor). Inhibited by ethanol, acetone, SDS, and EDTA. Activity is strongly inhibited by mercury ions. Also inhibited by lithium, aluminum, calcium, barium and iron ions. Functionally, lignin degradation and detoxification of lignin-derived products. Has activity towards 2,2'-azino-bis(3-ethylbenzothiazoline-6-sulfonic acid) (ABTS). In Trametes hirsuta (White-rot fungus), this protein is Laccase-S.